Consider the following 437-residue polypeptide: Testis-specific Y-encoded-like protein 1 (437 aa).

A disordered region spans residues 1–81 (MSGLDGVKRT…QDAAGRGGTP (81 aa)). The span at 11–26 (TPLQTHSIIISDQVPS) shows a compositional bias: polar residues. Basic and acidic residues predominate over residues 28-40 (QDAHQYLRLRDQS). Lys156 is covalently cross-linked (Glycyl lysine isopeptide (Lys-Gly) (interchain with G-Cter in SUMO2)).

It belongs to the nucleosome assembly protein (NAP) family. Post-translationally, ubiquitinated by the CRL2(APPBP2) complex, which recognizes the Arg-Xaa-Xaa-Gly sequence at the C-terminus, leading to its degradation. In terms of tissue distribution, expressed in testis, ovary, liver, spleen, brain, kidney, prostate, lung, liver, and heart.

It localises to the nucleus. Its subcellular location is the nucleolus. This chain is Testis-specific Y-encoded-like protein 1 (TSPYL1), found in Homo sapiens (Human).